A 148-amino-acid polypeptide reads, in one-letter code: Transcriptional regulator MraZ (148 aa).

2 SpoVT-AbrB domains span residues 5 to 53 (ETAI…VEKE) and 82 to 125 (SALL…SEQA).

This sequence belongs to the MraZ family. In terms of assembly, forms oligomers.

The protein resides in the cytoplasm. It localises to the nucleoid. This Xylella fastidiosa (strain 9a5c) protein is Transcriptional regulator MraZ.